Reading from the N-terminus, the 541-residue chain is MAKELKFSEDARSAMLKGVDQLADTVKSTLGPKGRNVVLEQSYGSPTITNDGVTIAKAIELDDHFENMGAKLVSEVASKTNDIAGDGTTTATVLTQSIVNEGMKNVTAGANPVGIRRGIEEATKTAVDSLHAMAHEVKTQEDIAQIASVSSASEETGKLIAEAMEKVGHDGVITIEESRGVDTSLDVVEGMQFDRGYLSQYMVTDNDKMEADLDNPYILITDKKISNIQDILPLLQSIVEQGKPLLIIADDISGEALPTLVLNKMRGTFNVVAVKAPGFGDRRKEQLQDIAILTGGTVITDDLGLELKDTTIDQLGQANKVTVTKDNTTIVEGAGSKDAISERVEFIRNQIGETTSDFDKEKLQERLAKLAGGVAVVRVGAATETELKERKYRIEDALNATRAAVEEGFVAGGGTALINVIKDVAALKETGDVQTGINIVKRALEEPVRQIAENAGLEGSVIVEKMKEQKPGVGFNAATDEWVDMIKAGIVDPTKVTRSALQNAASVSALLLTTEAVVAEKPEENAPAAPAAPNPGMGGMM.

ATP is bound by residues 29–32 (TLGP), 86–90 (DGTTT), Gly413, 476–478 (NAA), and Asp492. The segment at 521–541 (KPEENAPAAPAAPNPGMGGMM) is disordered. Residues 525–535 (NAPAAPAAPNP) are compositionally biased toward low complexity.

Belongs to the chaperonin (HSP60) family. In terms of assembly, forms a cylinder of 14 subunits composed of two heptameric rings stacked back-to-back. Interacts with the co-chaperonin GroES.

The protein localises to the cytoplasm. The catalysed reaction is ATP + H2O + a folded polypeptide = ADP + phosphate + an unfolded polypeptide.. Together with its co-chaperonin GroES, plays an essential role in assisting protein folding. The GroEL-GroES system forms a nano-cage that allows encapsulation of the non-native substrate proteins and provides a physical environment optimized to promote and accelerate protein folding. This chain is Chaperonin GroEL, found in Lactiplantibacillus plantarum (strain ATCC BAA-793 / NCIMB 8826 / WCFS1) (Lactobacillus plantarum).